Consider the following 127-residue polypeptide: Large ribosomal subunit protein bL20 (127 aa).

Belongs to the bacterial ribosomal protein bL20 family.

In terms of biological role, binds directly to 23S ribosomal RNA and is necessary for the in vitro assembly process of the 50S ribosomal subunit. It is not involved in the protein synthesizing functions of that subunit. The sequence is that of Large ribosomal subunit protein bL20 from Bifidobacterium longum (strain DJO10A).